The chain runs to 398 residues: Enolase (398 aa).

Glutamine 154 provides a ligand contact to (2R)-2-phosphoglycerate. Residue glutamate 196 is the Proton donor of the active site. The Mg(2+) site is built by aspartate 232, glutamate 273, and aspartate 300. Residues lysine 325, arginine 354, serine 355, and lysine 376 each coordinate (2R)-2-phosphoglycerate. Lysine 325 serves as the catalytic Proton acceptor.

This sequence belongs to the enolase family. Mg(2+) is required as a cofactor.

Its subcellular location is the cytoplasm. The protein localises to the secreted. It localises to the cell surface. It catalyses the reaction (2R)-2-phosphoglycerate = phosphoenolpyruvate + H2O. Its pathway is carbohydrate degradation; glycolysis; pyruvate from D-glyceraldehyde 3-phosphate: step 4/5. Catalyzes the reversible conversion of 2-phosphoglycerate (2-PG) into phosphoenolpyruvate (PEP). It is essential for the degradation of carbohydrates via glycolysis. The polypeptide is Enolase (Natronomonas pharaonis (strain ATCC 35678 / DSM 2160 / CIP 103997 / JCM 8858 / NBRC 14720 / NCIMB 2260 / Gabara) (Halobacterium pharaonis)).